The chain runs to 73 residues: UPF0352 protein APJL_0577 (73 aa).

It belongs to the UPF0352 family.

This is UPF0352 protein APJL_0577 from Actinobacillus pleuropneumoniae serotype 3 (strain JL03).